A 776-amino-acid chain; its full sequence is DNA topoisomerase 1 (776 aa).

Positions 1–111 constitute a Toprim domain; sequence MKLVIVESPA…VESDDFFKRV (111 aa). 2 residues coordinate Mg(2+): Glu7 and Asp80. A Topo IA-type catalytic domain is found at 132–568; that stretch reads DTNLVNAQQA…FWRGFNHNIE (437 aa). The segment at 166–171 is interaction with DNA; the sequence is SAGRVQ. Tyr304 (O-(5'-phospho-DNA)-tyrosine intermediate) is an active-site residue. A C4-type zinc finger spans residues 600–627; it reads CPSCKTGQLSLKLGKFGAFLACSNYPEC.

Belongs to the type IA topoisomerase family. Monomer. It depends on Mg(2+) as a cofactor.

It carries out the reaction ATP-independent breakage of single-stranded DNA, followed by passage and rejoining.. Functionally, releases the supercoiling and torsional tension of DNA, which is introduced during the DNA replication and transcription, by transiently cleaving and rejoining one strand of the DNA duplex. Introduces a single-strand break via transesterification at a target site in duplex DNA. The scissile phosphodiester is attacked by the catalytic tyrosine of the enzyme, resulting in the formation of a DNA-(5'-phosphotyrosyl)-enzyme intermediate and the expulsion of a 3'-OH DNA strand. The free DNA strand then undergoes passage around the unbroken strand, thus removing DNA supercoils. Finally, in the religation step, the DNA 3'-OH attacks the covalent intermediate to expel the active-site tyrosine and restore the DNA phosphodiester backbone. This Rickettsia prowazekii (strain Madrid E) protein is DNA topoisomerase 1.